The following is a 427-amino-acid chain: Adenylosuccinate synthetase (427 aa).

GTP-binding positions include 12 to 18 (GDEGKGK) and 40 to 42 (GHT). D13 functions as the Proton acceptor in the catalytic mechanism. 2 residues coordinate Mg(2+): D13 and G40. IMP is bound by residues 13–16 (DEGK), 38–41 (NAGH), T126, R140, Q221, T236, and R299. Catalysis depends on H41, which acts as the Proton donor. Residue 295-301 (STTKRPR) coordinates substrate. GTP contacts are provided by residues R301, 327–329 (KLD), and 409–411 (SVG).

It belongs to the adenylosuccinate synthetase family. In terms of assembly, homodimer. It depends on Mg(2+) as a cofactor.

The protein resides in the cytoplasm. The catalysed reaction is IMP + L-aspartate + GTP = N(6)-(1,2-dicarboxyethyl)-AMP + GDP + phosphate + 2 H(+). It participates in purine metabolism; AMP biosynthesis via de novo pathway; AMP from IMP: step 1/2. In terms of biological role, plays an important role in the de novo pathway of purine nucleotide biosynthesis. Catalyzes the first committed step in the biosynthesis of AMP from IMP. This is Adenylosuccinate synthetase from Borrelia duttonii (strain Ly).